We begin with the raw amino-acid sequence, 369 residues long: tRNA-specific 2-thiouridylase MnmA (369 aa).

ATP-binding positions include 10-17 (GLSGGVDS) and Leu36. The active-site Nucleophile is Cys97. Cys97 and Cys196 are disulfide-bonded. ATP is bound at residue Gly122. The interval 146-148 (KDQ) is interaction with tRNA. The Cysteine persulfide intermediate role is filled by Cys196. The tract at residues 301–302 (RY) is interaction with tRNA.

Belongs to the MnmA/TRMU family.

The protein localises to the cytoplasm. It catalyses the reaction S-sulfanyl-L-cysteinyl-[protein] + uridine(34) in tRNA + AH2 + ATP = 2-thiouridine(34) in tRNA + L-cysteinyl-[protein] + A + AMP + diphosphate + H(+). Its function is as follows. Catalyzes the 2-thiolation of uridine at the wobble position (U34) of tRNA, leading to the formation of s(2)U34. This is tRNA-specific 2-thiouridylase MnmA from Thermosynechococcus vestitus (strain NIES-2133 / IAM M-273 / BP-1).